The following is a 113-amino-acid chain: 2Fe-2S ferredoxin (113 aa).

In terms of domain architecture, 2Fe-2S ferredoxin-type spans 2–104; it reads PKVIFLPNED…DLVVEIPKYN (103 aa). 4 residues coordinate [2Fe-2S] cluster: Cys-42, Cys-48, Cys-51, and Cys-87.

The protein belongs to the adrenodoxin/putidaredoxin family. [2Fe-2S] cluster is required as a cofactor.

Its function is as follows. Ferredoxin are iron-sulfur proteins that transfer electrons in a wide variety of metabolic reactions. The sequence is that of 2Fe-2S ferredoxin (fdx) from Haemophilus influenzae (strain ATCC 51907 / DSM 11121 / KW20 / Rd).